The primary structure comprises 197 residues: Imidazoleglycerol-phosphate dehydratase (197 aa).

The protein belongs to the imidazoleglycerol-phosphate dehydratase family.

It localises to the cytoplasm. It carries out the reaction D-erythro-1-(imidazol-4-yl)glycerol 3-phosphate = 3-(imidazol-4-yl)-2-oxopropyl phosphate + H2O. It participates in amino-acid biosynthesis; L-histidine biosynthesis; L-histidine from 5-phospho-alpha-D-ribose 1-diphosphate: step 6/9. The protein is Imidazoleglycerol-phosphate dehydratase of Rhodopseudomonas palustris (strain BisB5).